The chain runs to 227 residues: Large ribosomal subunit protein uL1 (227 aa).

Belongs to the universal ribosomal protein uL1 family. Part of the 50S ribosomal subunit.

Functionally, binds directly to 23S rRNA. The L1 stalk is quite mobile in the ribosome, and is involved in E site tRNA release. Protein L1 is also a translational repressor protein, it controls the translation of the L11 operon by binding to its mRNA. The protein is Large ribosomal subunit protein uL1 of Brevibacillus brevis (strain 47 / JCM 6285 / NBRC 100599).